The primary structure comprises 518 residues: Glutamate--cysteine ligase (518 aa).

This sequence belongs to the glutamate--cysteine ligase type 1 family. Type 1 subfamily.

It catalyses the reaction L-cysteine + L-glutamate + ATP = gamma-L-glutamyl-L-cysteine + ADP + phosphate + H(+). The protein operates within sulfur metabolism; glutathione biosynthesis; glutathione from L-cysteine and L-glutamate: step 1/2. This is Glutamate--cysteine ligase from Salmonella typhi.